A 1461-amino-acid chain; its full sequence is Neogenin (1461 aa).

Positions 1 to 33 are cleaved as a signal peptide; sequence MAAERGARRLLSTPSFWLYCLLLLGRRAPGAAA. Topologically, residues 34 to 1105 are extracellular; that stretch reads ARSGSAPQSP…PTSPLDSNML (1072 aa). Ig-like C2-type domains lie at 52-141, 152-238, 243-336, and 341-426; these read PFYF…TIIS, PRFT…VELK, PEVI…AELT, and PEFL…AQLI. A glycan (N-linked (GlcNAc...) asparagine) is linked at N73. Cystine bridges form between C74–C129, C173–C221, and C270–C320. An N-linked (GlcNAc...) asparagine glycan is attached at N210. N326 carries N-linked (GlcNAc...) asparagine glycosylation. C362 and C410 are joined by a disulfide. Fibronectin type-III domains lie at 441–535, 541–631, 636–731, 741–831, 856–952, and 957–1054; these read APRD…TQPE, PAPN…TLSD, APQN…TFES, VPSS…RPHT, PPVG…TFEL, and PPKD…TPKA. 2 N-linked (GlcNAc...) asparagine glycosylation sites follow: N470 and N489. Residues N639 and N715 are each glycosylated (N-linked (GlcNAc...) asparagine). A glycan (N-linked (GlcNAc...) asparagine) is linked at N909. Residues 1041 to 1097 form a disordered region; it reads GPMSEAVQFRTPKADSSDKMPNDQASGSGGKGSRLPDLGSDYKPPMSGSNSPHGSPT. Residues 1052–1061 are compositionally biased toward basic and acidic residues; it reads PKADSSDKMP. The segment covering 1087–1097 has biased composition (polar residues); the sequence is SGSNSPHGSPT. Residues 1106 to 1126 form a helical membrane-spanning segment; sequence LVIIVSVGVITIVVVVIIAVF. Residues 1127-1461 lie on the Cytoplasmic side of the membrane; that stretch reads CTRRTTSHQK…MKDLNAITTA (335 aa). 4 disordered regions span residues 1138-1160, 1174-1206, 1235-1276, and 1289-1381; these read KRAACKSVNGSHKYKGNSKDVKP, PIDKSPDPNPIMTDTPIPRNSQDITPVDNSMDS, PKMM…PARS, and TSMS…ALPS. 2 positions are modified to phosphoserine: S1178 and S1194. Over residues 1191-1206 the composition is skewed to polar residues; the sequence is PRNSQDITPVDNSMDS. T1198 carries the phosphothreonine modification. Composition is skewed to polar residues over residues 1289–1322 and 1330–1349; these read TSMSLSDRANSTESVRNTPSTDTMPASSSQTCCT and ATSSSYLASSQEEDSGQSLP. A compositionally biased stretch (pro residues) spans 1366-1375; sequence AIPPPGPPTY. Residue S1401 is modified to Phosphoserine. T1404 is modified (phosphothreonine). Phosphoserine is present on residues S1432, S1434, and S1435.

The protein belongs to the immunoglobulin superfamily. DCC family. In terms of assembly, interacts with MYO10. Interacts with RGMA and RGMB. Interacts with BMP2, BMP4, BMP6, and BMP7. As to expression, widely expressed and also in cancer cell lines.

The protein localises to the cell membrane. Its function is as follows. Multi-functional cell surface receptor regulating cell adhesion in many diverse developmental processes, including neural tube and mammary gland formation, myogenesis and angiogenesis. Receptor for members of the BMP, netrin, and repulsive guidance molecule (RGM) families. Netrin-Neogenin interactions result in a chemoattractive axon guidance response and cell-cell adhesion, the interaction between NEO1/Neogenin and RGMa and RGMb induces a chemorepulsive response. The protein is Neogenin (NEO1) of Homo sapiens (Human).